Reading from the N-terminus, the 193-residue chain is Potassium-transporting ATPase KdpC subunit (193 aa).

A helical membrane pass occupies residues 7 to 27; the sequence is PLVVLFVVLTAVTGLAYPAVM.

It belongs to the KdpC family. In terms of assembly, the system is composed of three essential subunits: KdpA, KdpB and KdpC.

Its subcellular location is the cell inner membrane. Part of the high-affinity ATP-driven potassium transport (or Kdp) system, which catalyzes the hydrolysis of ATP coupled with the electrogenic transport of potassium into the cytoplasm. This subunit acts as a catalytic chaperone that increases the ATP-binding affinity of the ATP-hydrolyzing subunit KdpB by the formation of a transient KdpB/KdpC/ATP ternary complex. The polypeptide is Potassium-transporting ATPase KdpC subunit (Burkholderia orbicola (strain MC0-3)).